The following is an 809-amino-acid chain: Quinate/shikimate dehydrogenase (quinone) (809 aa).

5 helical membrane-spanning segments follow: residues 14 to 34, 41 to 61, 68 to 88, 90 to 110, and 127 to 147; these read VWCF…VIGG, GGSW…FFMF, VWLY…DAGF, FWPL…VMLT, and AYVI…GMFI.

This sequence belongs to the bacterial PQQ dehydrogenase family. Pyrroloquinoline quinone is required as a cofactor.

The protein localises to the cell membrane. It carries out the reaction L-quinate + a quinone = 3-dehydroquinate + a quinol. The catalysed reaction is shikimate + a quinone = 3-dehydroshikimate + a quinol. Its pathway is aromatic compound metabolism; 3,4-dihydroxybenzoate biosynthesis; 3-dehydroquinate from D-quinate (PQQ route): step 1/1. Functionally, can act either on quinate or on shikimate. The chain is Quinate/shikimate dehydrogenase (quinone) (quiA) from Acinetobacter baylyi (strain ATCC 33305 / BD413 / ADP1).